A 436-amino-acid chain; its full sequence is Nicotinate phosphoribosyltransferase (436 aa).

His-231 is subject to Phosphohistidine; by autocatalysis.

It belongs to the NAPRTase family. In terms of processing, transiently phosphorylated on a His residue during the reaction cycle. Phosphorylation strongly increases the affinity for substrates and increases the rate of nicotinate D-ribonucleotide production. Dephosphorylation regenerates the low-affinity form of the enzyme, leading to product release.

It carries out the reaction nicotinate + 5-phospho-alpha-D-ribose 1-diphosphate + ATP + H2O = nicotinate beta-D-ribonucleotide + ADP + phosphate + diphosphate. The protein operates within cofactor biosynthesis; NAD(+) biosynthesis; nicotinate D-ribonucleotide from nicotinate: step 1/1. In terms of biological role, catalyzes the synthesis of beta-nicotinate D-ribonucleotide from nicotinate and 5-phospho-D-ribose 1-phosphate at the expense of ATP. This chain is Nicotinate phosphoribosyltransferase, found in Vibrio parahaemolyticus serotype O3:K6 (strain RIMD 2210633).